Here is a 141-residue protein sequence, read N- to C-terminus: Putative antiporter subunit mnhB2 (141 aa).

Helical transmembrane passes span T10–G30, G35–F55, K70–G90, and L116–L136.

This sequence belongs to the CPA3 antiporters (TC 2.A.63) subunit B family. May form a heterooligomeric complex that consists of seven subunits: mnhA2, mnhB2, mnhC2, mnhD2, mnhE2, mnhF2 and mnhG2.

Its subcellular location is the cell membrane. The polypeptide is Putative antiporter subunit mnhB2 (mnhB2) (Staphylococcus haemolyticus (strain JCSC1435)).